Here is a 668-residue protein sequence, read N- to C-terminus: Fructose-1,6-bisphosphatase class 3 (668 aa).

It belongs to the FBPase class 3 family. The cofactor is Mn(2+).

It catalyses the reaction beta-D-fructose 1,6-bisphosphate + H2O = beta-D-fructose 6-phosphate + phosphate. It participates in carbohydrate biosynthesis; gluconeogenesis. The polypeptide is Fructose-1,6-bisphosphatase class 3 (Clostridium botulinum (strain 657 / Type Ba4)).